The following is a 463-amino-acid chain: tRNA modification GTPase MnmE (463 aa).

Positions 30, 92, and 132 each coordinate (6S)-5-formyl-5,6,7,8-tetrahydrofolate. The TrmE-type G domain occupies Gly-227–Gly-386. Residue Asn-237 participates in K(+) binding. Residues Asn-237–Ser-242, Thr-256–Thr-262, Asp-281–Gly-284, and Asn-342–Asp-345 each bind GTP. Ser-241 serves as a coordination point for Mg(2+). Thr-256, Leu-258, and Thr-261 together coordinate K(+). Thr-262 contributes to the Mg(2+) binding site. Lys-463 serves as a coordination point for (6S)-5-formyl-5,6,7,8-tetrahydrofolate.

It belongs to the TRAFAC class TrmE-Era-EngA-EngB-Septin-like GTPase superfamily. TrmE GTPase family. In terms of assembly, homodimer. Heterotetramer of two MnmE and two MnmG subunits. The cofactor is K(+).

Its subcellular location is the cytoplasm. Functionally, exhibits a very high intrinsic GTPase hydrolysis rate. Involved in the addition of a carboxymethylaminomethyl (cmnm) group at the wobble position (U34) of certain tRNAs, forming tRNA-cmnm(5)s(2)U34. This is tRNA modification GTPase MnmE from Synechococcus sp. (strain CC9311).